A 476-amino-acid polypeptide reads, in one-letter code: 1-aminocyclopropane-1-carboxylate synthase 4 (476 aa).

N6-(pyridoxal phosphate)lysine is present on lysine 282.

It belongs to the class-I pyridoxal-phosphate-dependent aminotransferase family. In terms of assembly, homodimer. The cofactor is pyridoxal 5'-phosphate.

It catalyses the reaction S-adenosyl-L-methionine = 1-aminocyclopropane-1-carboxylate + S-methyl-5'-thioadenosine + H(+). It functions in the pathway alkene biosynthesis; ethylene biosynthesis via S-adenosyl-L-methionine; ethylene from S-adenosyl-L-methionine: step 1/2. Functionally, catalyzes the formation of 1-aminocyclopropane-1-carboxylate, a direct precursor of ethylene in higher plants. This chain is 1-aminocyclopropane-1-carboxylate synthase 4 (ACS4), found in Solanum lycopersicum (Tomato).